The sequence spans 83 residues: MRFHTLLFLSFLLLVSCALICTAQHPGLEKSGMFHENVGKGQHIEEKRSCIERMQTCEVEAGLPCCSGAPCICPYIGDCICIQ.

Positions 1-23 are cleaved as a signal peptide; sequence MRFHTLLFLSFLLLVSCALICTA. A propeptide spanning residues 24–48 is cleaved from the precursor; it reads QHPGLEKSGMFHENVGKGQHIEEKR. 3 disulfide bridges follow: C50–C66, C57–C71, and C65–C81.

It belongs to the neurotoxin 07 (Beta/delta-agtx) family. 03 (aga-4) subfamily. JZTX sub-subfamily. In terms of tissue distribution, expressed by the venom gland.

The protein localises to the secreted. In terms of biological role, inhibits TTX-sensitive sodium currents in rat dorsal root ganglion (DRG) neurons. The chain is U25-theraphotoxin-Cg1a from Chilobrachys guangxiensis (Chinese earth tiger tarantula).